We begin with the raw amino-acid sequence, 280 residues long: Large ribosomal subunit protein uL2 (280 aa).

Disordered regions lie at residues 1-59 and 223-280; these read MAIR…GGHK and GVVM…NKKR. A compositionally biased stretch (basic and acidic residues) spans 23-33; that stretch reads ELTRSTPEKSL. Composition is skewed to basic residues over residues 36–59 and 269–280; these read PLHK…GGHK and VRRRRSNKNKKR.

Belongs to the universal ribosomal protein uL2 family. Part of the 50S ribosomal subunit. Forms a bridge to the 30S subunit in the 70S ribosome.

One of the primary rRNA binding proteins. Required for association of the 30S and 50S subunits to form the 70S ribosome, for tRNA binding and peptide bond formation. It has been suggested to have peptidyltransferase activity; this is somewhat controversial. Makes several contacts with the 16S rRNA in the 70S ribosome. This chain is Large ribosomal subunit protein uL2, found in Corynebacterium kroppenstedtii (strain DSM 44385 / JCM 11950 / CIP 105744 / CCUG 35717).